Consider the following 306-residue polypeptide: Methionyl-tRNA formyltransferase (306 aa).

Position 105–108 (105–108) interacts with (6S)-5,6,7,8-tetrahydrofolate; the sequence is SLLP.

The protein belongs to the Fmt family.

The catalysed reaction is L-methionyl-tRNA(fMet) + (6R)-10-formyltetrahydrofolate = N-formyl-L-methionyl-tRNA(fMet) + (6S)-5,6,7,8-tetrahydrofolate + H(+). Functionally, attaches a formyl group to the free amino group of methionyl-tRNA(fMet). The formyl group appears to play a dual role in the initiator identity of N-formylmethionyl-tRNA by promoting its recognition by IF2 and preventing the misappropriation of this tRNA by the elongation apparatus. This Rubrobacter xylanophilus (strain DSM 9941 / JCM 11954 / NBRC 16129 / PRD-1) protein is Methionyl-tRNA formyltransferase.